Here is a 149-residue protein sequence, read N- to C-terminus: Transcriptional regulator MraZ (149 aa).

SpoVT-AbrB domains follow at residues 7 to 54 (KYVN…GISH) and 83 to 126 (AVQL…QPQN).

This sequence belongs to the MraZ family. As to quaternary structure, forms oligomers.

It is found in the cytoplasm. The protein localises to the nucleoid. The protein is Transcriptional regulator MraZ of Rickettsia rickettsii (strain Sheila Smith).